A 381-amino-acid chain; its full sequence is F-box/LRR-repeat protein At4g14103 (381 aa).

Residues arginine 7 to proline 60 enclose the F-box domain. LRR repeat units lie at residues aspartate 118–phenylalanine 146, histidine 171–aspartate 196, serine 218–aspartate 243, tyrosine 249–tyrosine 274, threonine 299–serine 330, and asparagine 331–glycine 356.

This Arabidopsis thaliana (Mouse-ear cress) protein is F-box/LRR-repeat protein At4g14103.